A 207-amino-acid polypeptide reads, in one-letter code: Large ribosomal subunit protein uL4 (207 aa).

The disordered stretch occupies residues 52-75 (KNRSAVRGGGKKPWRQKGTGRARQ). The span at 60–71 (GGKKPWRQKGTG) shows a compositional bias: basic residues.

It belongs to the universal ribosomal protein uL4 family. Part of the 50S ribosomal subunit.

In terms of biological role, one of the primary rRNA binding proteins, this protein initially binds near the 5'-end of the 23S rRNA. It is important during the early stages of 50S assembly. It makes multiple contacts with different domains of the 23S rRNA in the assembled 50S subunit and ribosome. Forms part of the polypeptide exit tunnel. The sequence is that of Large ribosomal subunit protein uL4 from Limosilactobacillus fermentum (strain NBRC 3956 / LMG 18251) (Lactobacillus fermentum).